The chain runs to 137 residues: Small ribosomal subunit protein bS6 (137 aa).

It belongs to the bacterial ribosomal protein bS6 family.

Functionally, binds together with bS18 to 16S ribosomal RNA. The protein is Small ribosomal subunit protein bS6 of Mycoplasma mycoides subsp. mycoides SC (strain CCUG 32753 / NCTC 10114 / PG1).